The chain runs to 226 residues: N-acetyltransferase family 8 member 3 (226 aa).

The next 2 helical transmembrane spans lie at Met36 to Ala56 and Gly58 to Ala78. Positions Leu61–Thr220 constitute an N-acetyltransferase domain.

It belongs to the camello family.

It localises to the nucleus membrane. The protein resides in the cytoplasm. The protein localises to the perinuclear region. It catalyses the reaction L-lysyl-[protein] + acetyl-CoA = N(6)-acetyl-L-lysyl-[protein] + CoA + H(+). Has histone acetyltransferase activity in vitro, with specificity for histone H4. This is N-acetyltransferase family 8 member 3 from Mus musculus (Mouse).